We begin with the raw amino-acid sequence, 513 residues long: MDSSNAIFKSFLGKAPEWYKICIIAFLVINPLIYFFISPFVAGWALVAEFIFTLSMALKCYPLQPGGLLAIEAVFIGMTSAHHVKEEIMANFEVILLLMFMVAGIYFMKQLLLYVFTKLLIVIHSKKILSLAFCLSATFLSAFLDALTVIAVIISVGTGFYGVYHKVASGNSFEDSTDISNDEKIITNKEILEQFRAFLRSLLMHAAVGSALGGVMTMVGEPQNLIIAGQAEWGFVEFLLRVLPVSLPVLICGVITCLLLEHFKIFGYGARLPRRVWGVLARYNLLKEQRMTQQDRVKMGIQALAGIWLVVGLALHLADVGIIGLTIIIICTAFCGITDEHAIGRSFQEPMPFTALIVVFFTVVAVIVDLKLFEPIISYVLSADPHSQLALFYVFNGLLSMISDNVFVGTVYINEAKTALESAIISREQFDLIAVAINTGTNLPSVATPNGQAAFLFLLTSPFAPLIRLSYGKMLYMALPYTIVLSIIGFLSLEFLLPPLTELMSNWGWIITR.

Transmembrane regions (helical) follow at residues 21 to 41 (ICIIAFLVINPLIYFFISPFV), 64 to 84 (QPGGLLAIEAVFIGMTSAHHV), 88 to 108 (IMANFEVILLLMFMVAGIYFM), 119 to 139 (LLIVIHSKKILSLAFCLSATF), 143 to 163 (FLDALTVIAVIISVGTGFYGV), 202 to 222 (LLMHAAVGSALGGVMTMVGEP), 243 to 263 (LPVSLPVLICGVITCLLLEHF), 299 to 318 (MGIQALAGIWLVVGLALHLA), 322 to 344 (IIGLTIIIICTAFCGITDEHAIG), 350 to 370 (PMPFTALIVVFFTVVAVIVDL), 389 to 409 (LALFYVFNGLLSMISDNVFVG), and 477 to 497 (MALPYTIVLSIIGFLSLEFLL).

Belongs to the NhaB Na(+)/H(+) (TC 2.A.34) antiporter family.

It localises to the cell inner membrane. It carries out the reaction 2 Na(+)(in) + 3 H(+)(out) = 2 Na(+)(out) + 3 H(+)(in). In terms of biological role, na(+)/H(+) antiporter that extrudes sodium in exchange for external protons. The sequence is that of Na(+)/H(+) antiporter NhaB from Actinobacillus pleuropneumoniae serotype 3 (strain JL03).